Consider the following 72-residue polypeptide: MQKREPVIIAPDYTDDELYEWMRQKINAAQDLKWANEARAKQAENLSALEQDITNLEKAAALSIARMITYPR.

This is an uncharacterized protein from Escherichia coli (strain K12).